The chain runs to 313 residues: Porphobilinogen deaminase (313 aa).

Cysteine 242 is modified (S-(dipyrrolylmethanemethyl)cysteine).

This sequence belongs to the HMBS family. Monomer. Dipyrromethane is required as a cofactor.

The enzyme catalyses 4 porphobilinogen + H2O = hydroxymethylbilane + 4 NH4(+). It participates in porphyrin-containing compound metabolism; protoporphyrin-IX biosynthesis; coproporphyrinogen-III from 5-aminolevulinate: step 2/4. Its function is as follows. Tetrapolymerization of the monopyrrole PBG into the hydroxymethylbilane pre-uroporphyrinogen in several discrete steps. This Escherichia fergusonii (strain ATCC 35469 / DSM 13698 / CCUG 18766 / IAM 14443 / JCM 21226 / LMG 7866 / NBRC 102419 / NCTC 12128 / CDC 0568-73) protein is Porphobilinogen deaminase.